The primary structure comprises 550 residues: Crystal protein (550 aa).

The first 19 residues, 1–19 (MNKIIILLIILLSFDIISA), serve as a signal peptide directing secretion. A disulfide bridge links Cys91 with Cys111. N-linked (GlcNAc...) asparagine glycosylation occurs at Asn156. Catalysis depends on Ser215, which acts as the Acyl-ester intermediate. Residues Cys267 and Cys274 are joined by a disulfide bond. Catalysis depends on charge relay system residues Glu340 and His443. Asn506 is a glycosylation site (N-linked (GlcNAc...) asparagine).

The protein belongs to the type-B carboxylesterase/lipase family.

The protein resides in the cytoplasmic vesicle. It localises to the esterosome membrane. The sequence is that of Crystal protein (cryS) from Dictyostelium discoideum (Social amoeba).